Reading from the N-terminus, the 335-residue chain is Transmembrane protein 120B (335 aa).

The stretch at 1-39 forms a coiled coil; it reads MSLQKCQEEWGELEKEFQQLQETHKVYKQKLEELNGLQN. Helical transmembrane passes span 100-122, 130-150, 157-177, 193-213, 268-288, and 300-320; these read GLYLNLVLGNVNVTLLSNQAKFA, FKLYLTIILLLGAITCRFVLH, VFNFLLVWYYCTLTIRESILI, VSTFLSGVMLTWPDGLMYQIF, FLLPFLFFGHFWQLYNAITLF, and QVFVLALTFLLLFLGNFLTTL.

It belongs to the TMEM120 family.

It is found in the nucleus inner membrane. Functionally, necessary for efficient adipogenesis. Does not show ion channel activity. This Xenopus tropicalis (Western clawed frog) protein is Transmembrane protein 120B (tmem120b).